Here is a 219-residue protein sequence, read N- to C-terminus: Lipoprotein-releasing system ATP-binding protein LolD (219 aa).

The ABC transporter domain occupies 3-219 (IEARNIRKSF…HMRDGLLFSE (217 aa)). 35 to 42 (GTSGAGKT) contacts ATP.

Belongs to the ABC transporter superfamily. Lipoprotein translocase (TC 3.A.1.125) family. The complex is composed of two ATP-binding proteins (LolD) and two transmembrane proteins (LolC and LolE).

Its subcellular location is the cell inner membrane. In terms of biological role, part of the ABC transporter complex LolCDE involved in the translocation of mature outer membrane-directed lipoproteins, from the inner membrane to the periplasmic chaperone, LolA. Responsible for the formation of the LolA-lipoprotein complex in an ATP-dependent manner. The polypeptide is Lipoprotein-releasing system ATP-binding protein LolD (Porphyromonas gingivalis (strain ATCC BAA-308 / W83)).